The primary structure comprises 111 residues: Gastrula zinc finger protein XlCGF32.1 (111 aa).

4 C2H2-type zinc fingers span residues Phe-6–His-28, Phe-34–His-56, Ser-62–His-84, and Phe-89–His-111.

This sequence belongs to the krueppel C2H2-type zinc-finger protein family.

It is found in the nucleus. Functionally, may be involved in transcriptional regulation. This Xenopus laevis (African clawed frog) protein is Gastrula zinc finger protein XlCGF32.1.